Here is a 1138-residue protein sequence, read N- to C-terminus: Trafficking protein particle complex subunit 9 (1138 aa).

Residues S557 and S944 each carry the phosphoserine modification.

The protein belongs to the NIBP family. As to quaternary structure, component of the multisubunit TRAPP (transport protein particle) complex, which includes at least TRAPPC2, TRAPPC2L, TRAPPC3, TRAPPC3L, TRAPPC4, TRAPPC5, TRAPPC8, TRAPPC9, TRAPPC10, TRAPPC11 and TRAPPC12. Directly interacts with IKBKB and MAP3K14.

Its subcellular location is the golgi apparatus. It localises to the cis-Golgi network. The protein resides in the endoplasmic reticulum. It is found in the cytoplasm. Its function is as follows. Functions as an activator of NF-kappa-B through increased phosphorylation of the IKK complex. May function in neuronal cells differentiation. May play a role in vesicular transport from endoplasmic reticulum to Golgi. In Bos taurus (Bovine), this protein is Trafficking protein particle complex subunit 9 (TRAPPC9).